A 199-amino-acid chain; its full sequence is Cytosine-containing mismatch-binding protein 1 (199 aa).

The HMG box DNA-binding region spans Pro-123 to Gly-197.

As to quaternary structure, monomer.

The protein resides in the nucleus. In terms of biological role, binds to cytosines in base mismatches and opposite chemically altered guanines. May be involved in repair of DNA damage. This chain is Cytosine-containing mismatch-binding protein 1, found in Schizosaccharomyces pombe (strain 972 / ATCC 24843) (Fission yeast).